The sequence spans 249 residues: T-cell immunoreceptor with Ig and ITIM domains (249 aa).

The signal sequence occupies residues 1–28 (MHGWLLLVWVQGLIQAAFLATAIGATAG). Residues 29–127 (TIDTKRNISA…GGIYKGRIFL (99 aa)) form the Ig-like V-type domain. At 29–148 (TIDTKRNISA…LAQFQTAPLG (120 aa)) the chain is on the extracellular side. The interval 35-45 (NISAEEGGSVI) is homodimerization. Cys48 and Cys111 are oxidised to a cystine. N-linked (GlcNAc...) asparagine glycosylation occurs at Asn104. A helical membrane pass occupies residues 149 to 169 (GTMAAVLGLICLMVTGVTVLA). At 170 to 249 (RKDKSIRMHS…ESFIAVSKTG (80 aa)) the chain is on the cytoplasmic side. The disordered stretch occupies residues 182-222 (SGLGRTEAEPQEWNLRSLSSPGSPVQTQTAPAGPCGEQAED). A compositionally biased stretch (polar residues) spans 195 to 211 (NLRSLSSPGSPVQTQTA). Residues 234 to 239 (LSYRSL) carry the ITIM motif motif.

As to quaternary structure, homodimer in cis; binds with high affinity to PVR, forming a heterotetrameric assembly of two TIGIT and two PVR molecules. Binds with lower affinity to NECTIN2 and NECTIN3. Interacts with GRB2. Interacts with NECTIN4.

Its subcellular location is the cell membrane. Inhibitory receptor that plays a role in the modulation of immune responses. Suppresses T-cell activation by promoting the generation of mature immunoregulatory dendritic cells. Upon binding to its ligands PVR/CD155 or NECTIN2/CD112, which are expressed on antigen-presenting cells, sends inhibitory signals to the T-cell or NK cell. Mechanistically, interaction with ligand leads to phosphorylation of the cytoplasmic tail by Src family tyrosine kinases such as FYN or LCK, allowing subsequent binding to adapter GRB2 and SHIP1/INPP5D. In turn, inhibits PI3K and MAPK signaling cascades. In addition, associates with beta-arrestin-2/ARRB2 to recruit SHIP1/INPP5D that suppresses autoubiquitination of TRAF6 and subsequently inhibits NF-kappa-B signaling pathway. Also acts as a receptor for NECTIN4 to inhibit NK cell cytotoxicity. In Mus musculus (Mouse), this protein is T-cell immunoreceptor with Ig and ITIM domains.